Consider the following 349-residue polypeptide: 4-hydroxy-3-methylbut-2-enyl diphosphate reductase (349 aa).

C18 serves as a coordination point for [4Fe-4S] cluster. Positions 47 and 83 each coordinate (2E)-4-hydroxy-3-methylbut-2-enyl diphosphate. Positions 47 and 83 each coordinate dimethylallyl diphosphate. The isopentenyl diphosphate site is built by H47 and H83. C105 is a binding site for [4Fe-4S] cluster. (2E)-4-hydroxy-3-methylbut-2-enyl diphosphate is bound at residue H133. H133 contacts dimethylallyl diphosphate. H133 provides a ligand contact to isopentenyl diphosphate. E135 acts as the Proton donor in catalysis. T174 is a (2E)-4-hydroxy-3-methylbut-2-enyl diphosphate binding site. Residue C204 participates in [4Fe-4S] cluster binding. Residues S232, S233, N234, and S277 each contribute to the (2E)-4-hydroxy-3-methylbut-2-enyl diphosphate site. S232, S233, N234, and S277 together coordinate dimethylallyl diphosphate. The isopentenyl diphosphate site is built by S232, S233, N234, and S277.

The protein belongs to the IspH family. [4Fe-4S] cluster serves as cofactor.

The catalysed reaction is isopentenyl diphosphate + 2 oxidized [2Fe-2S]-[ferredoxin] + H2O = (2E)-4-hydroxy-3-methylbut-2-enyl diphosphate + 2 reduced [2Fe-2S]-[ferredoxin] + 2 H(+). The enzyme catalyses dimethylallyl diphosphate + 2 oxidized [2Fe-2S]-[ferredoxin] + H2O = (2E)-4-hydroxy-3-methylbut-2-enyl diphosphate + 2 reduced [2Fe-2S]-[ferredoxin] + 2 H(+). The protein operates within isoprenoid biosynthesis; dimethylallyl diphosphate biosynthesis; dimethylallyl diphosphate from (2E)-4-hydroxy-3-methylbutenyl diphosphate: step 1/1. It functions in the pathway isoprenoid biosynthesis; isopentenyl diphosphate biosynthesis via DXP pathway; isopentenyl diphosphate from 1-deoxy-D-xylulose 5-phosphate: step 6/6. Its function is as follows. Catalyzes the conversion of 1-hydroxy-2-methyl-2-(E)-butenyl 4-diphosphate (HMBPP) into a mixture of isopentenyl diphosphate (IPP) and dimethylallyl diphosphate (DMAPP). Acts in the terminal step of the DOXP/MEP pathway for isoprenoid precursor biosynthesis. This is 4-hydroxy-3-methylbut-2-enyl diphosphate reductase from Bartonella bacilliformis (strain ATCC 35685 / KC583 / Herrer 020/F12,63).